A 248-amino-acid polypeptide reads, in one-letter code: Probable transcriptional regulatory protein Dde_2325 (248 aa).

Basic residues predominate over residues 1–15 (MAGHSKWKNIQHRKG). A disordered region spans residues 1-22 (MAGHSKWKNIQHRKGRQDAKKS).

Belongs to the TACO1 family.

It is found in the cytoplasm. The polypeptide is Probable transcriptional regulatory protein Dde_2325 (Oleidesulfovibrio alaskensis (strain ATCC BAA-1058 / DSM 17464 / G20) (Desulfovibrio alaskensis)).